Reading from the N-terminus, the 315-residue chain is Methionyl-tRNA formyltransferase (315 aa).

A (6S)-5,6,7,8-tetrahydrofolate-binding site is contributed by 113 to 116 (SLLP).

It belongs to the Fmt family.

It carries out the reaction L-methionyl-tRNA(fMet) + (6R)-10-formyltetrahydrofolate = N-formyl-L-methionyl-tRNA(fMet) + (6S)-5,6,7,8-tetrahydrofolate + H(+). In terms of biological role, attaches a formyl group to the free amino group of methionyl-tRNA(fMet). The formyl group appears to play a dual role in the initiator identity of N-formylmethionyl-tRNA by promoting its recognition by IF2 and preventing the misappropriation of this tRNA by the elongation apparatus. This Pseudoalteromonas atlantica (strain T6c / ATCC BAA-1087) protein is Methionyl-tRNA formyltransferase.